The following is a 233-amino-acid chain: Translation initiation factor IF-3 (233 aa).

Disordered stretches follow at residues 1-21 (MAIQ…RTNR) and 184-233 (LQSQ…AAQR). Positions 193–211 (AAAAAAPAAAPAAPAAGAP) are enriched in low complexity. The segment covering 212–223 (APAPAPAAPAPA) has biased composition (pro residues). Positions 224-233 (PAAADPAAQR) are enriched in low complexity.

Belongs to the IF-3 family. As to quaternary structure, monomer.

It is found in the cytoplasm. Functionally, IF-3 binds to the 30S ribosomal subunit and shifts the equilibrium between 70S ribosomes and their 50S and 30S subunits in favor of the free subunits, thus enhancing the availability of 30S subunits on which protein synthesis initiation begins. This chain is Translation initiation factor IF-3, found in Anaeromyxobacter dehalogenans (strain 2CP-C).